The sequence spans 298 residues: Glutamyl-Q tRNA(Asp) synthetase (298 aa).

Residues 8–12 (RFAPS) and E44 each bind L-glutamate. The 'HIGH' region signature appears at 11–21 (PSPTGPLHFGS). Zn(2+) contacts are provided by C100, C102, Y123, and C127. The L-glutamate site is built by Y183 and R201. The short motif at 239 to 243 (KLSKQ) is the 'KMSKS' region element. Position 242 (K242) interacts with ATP.

It belongs to the class-I aminoacyl-tRNA synthetase family. GluQ subfamily. Requires Zn(2+) as cofactor.

Its function is as follows. Catalyzes the tRNA-independent activation of glutamate in presence of ATP and the subsequent transfer of glutamate onto a tRNA(Asp). Glutamate is transferred on the 2-amino-5-(4,5-dihydroxy-2-cyclopenten-1-yl) moiety of the queuosine in the wobble position of the QUC anticodon. The polypeptide is Glutamyl-Q tRNA(Asp) synthetase (Burkholderia orbicola (strain MC0-3)).